The following is a 126-amino-acid chain: Histone H2B type 1-K (126 aa).

Low complexity predominate over residues 1–12 (MPEPAKSAPAPK). The disordered stretch occupies residues 1-36 (MPEPAKSAPAPKKGSKKAVTKAQKKDGKKRKRSRKE). An N-acetylproline modification is found at proline 2. Glutamate 3 is subject to ADP-ribosyl glutamic acid. The residue at position 6 (lysine 6) is an N6-(2-hydroxyisobutyryl)lysine; alternate. An N6-(beta-hydroxybutyryl)lysine; alternate modification is found at lysine 6. Lysine 6 carries the N6-acetyllysine; alternate modification. Lysine 6 is modified (N6-butyryllysine; alternate). Lysine 6 carries the N6-crotonyllysine; alternate modification. Position 6 is an N6-lactoyllysine; alternate (lysine 6). Lysine 6 participates in a covalent cross-link: Glycyl lysine isopeptide (Lys-Gly) (interchain with G-Cter in SUMO2); alternate. Serine 7 is subject to ADP-ribosylserine. Lysine 12 bears the N6-(beta-hydroxybutyryl)lysine; alternate mark. Residues lysine 12 and lysine 13 each carry the N6-acetyllysine; alternate modification. 2 positions are modified to N6-crotonyllysine; alternate: lysine 12 and lysine 13. An N6-lactoyllysine; alternate modification is found at lysine 12. The residue at position 13 (lysine 13) is an N6-(2-hydroxyisobutyryl)lysine; alternate. Serine 15 is subject to Phosphoserine; by STK4/MST1. 4 positions are modified to N6-acetyllysine; alternate: lysine 16, lysine 17, lysine 21, and lysine 24. N6-crotonyllysine; alternate is present on residues lysine 16, lysine 17, lysine 21, and lysine 24. An N6-lactoyllysine; alternate mark is found at lysine 16, lysine 17, lysine 21, and lysine 24. Residues lysine 17 and lysine 21 each carry the N6-(beta-hydroxybutyryl)lysine; alternate modification. Position 17 is an N6-glutaryllysine; alternate (lysine 17). Residues lysine 21 and lysine 24 each carry the N6-(2-hydroxyisobutyryl)lysine; alternate modification. The residue at position 21 (lysine 21) is an N6-butyryllysine; alternate. A Glycyl lysine isopeptide (Lys-Gly) (interchain with G-Cter in SUMO2); alternate cross-link involves residue lysine 21. Lysine 25 is subject to N6-(2-hydroxyisobutyryl)lysine. Position 35 is an N6-(2-hydroxyisobutyryl)lysine; alternate (lysine 35). Lysine 35 carries the post-translational modification N6-(beta-hydroxybutyryl)lysine; alternate. An N6-crotonyllysine; alternate modification is found at lysine 35. N6-glutaryllysine; alternate is present on lysine 35. N6-succinyllysine; alternate is present on lysine 35. A Glycyl lysine isopeptide (Lys-Gly) (interchain with G-Cter in ubiquitin); alternate cross-link involves residue lysine 35. Position 36 is a polyADP-ribosyl glutamic acid (glutamate 36). At serine 37 the chain carries Phosphoserine; by AMPK. Lysine 44, lysine 47, and lysine 58 each carry N6-(2-hydroxyisobutyryl)lysine; alternate. An N6-lactoyllysine; alternate modification is found at lysine 44. N6-glutaryllysine; alternate occurs at positions 44 and 47. Position 47 is an N6-methyllysine; alternate (lysine 47). Lysine 58 is modified (N6,N6-dimethyllysine; alternate). Arginine 80 carries the dimethylated arginine modification. Position 86 is an N6-(2-hydroxyisobutyryl)lysine; alternate (lysine 86). Lysine 86 carries the N6-(beta-hydroxybutyryl)lysine; alternate modification. Lysine 86 bears the N6-acetyllysine; alternate mark. Lysine 86 bears the N6-lactoyllysine; alternate mark. Lysine 86 bears the N6,N6,N6-trimethyllysine; alternate mark. Omega-N-methylarginine occurs at positions 87 and 93. Lysine 109 bears the N6-(2-hydroxyisobutyryl)lysine; alternate mark. An N6-lactoyllysine; alternate modification is found at lysine 109. Lysine 109 is subject to N6-glutaryllysine; alternate. Lysine 109 carries the post-translational modification N6-methyllysine; alternate. Serine 113 carries O-linked (GlcNAc) serine glycosylation. Threonine 116 carries the phosphothreonine modification. 2 positions are modified to N6-(2-hydroxyisobutyryl)lysine; alternate: lysine 117 and lysine 121. N6-(beta-hydroxybutyryl)lysine; alternate occurs at positions 117 and 121. Lysine 117 and lysine 121 each carry N6-lactoyllysine; alternate. An N6-glutaryllysine; alternate mark is found at lysine 117 and lysine 121. 2 positions are modified to N6-succinyllysine; alternate: lysine 117 and lysine 121. Position 117 is an N6-malonyllysine; alternate (lysine 117). Lysine 117 is subject to N6-methylated lysine; alternate. Lysine 121 is covalently cross-linked (Glycyl lysine isopeptide (Lys-Gly) (interchain with G-Cter in ubiquitin); alternate).

This sequence belongs to the histone H2B family. In terms of assembly, the nucleosome is a histone octamer containing two molecules each of H2A, H2B, H3 and H4 assembled in one H3-H4 heterotetramer and two H2A-H2B heterodimers. The octamer wraps approximately 147 bp of DNA. Post-translationally, monoubiquitination at Lys-35 (H2BK34Ub) by the MSL1/MSL2 dimer is required for histone H3 'Lys-4' (H3K4me) and 'Lys-79' (H3K79me) methylation and transcription activation at specific gene loci, such as HOXA9 and MEIS1 loci. Similarly, monoubiquitination at Lys-121 (H2BK120Ub) by the RNF20/40 complex gives a specific tag for epigenetic transcriptional activation and is also prerequisite for histone H3 'Lys-4' and 'Lys-79' methylation. It also functions cooperatively with the FACT dimer to stimulate elongation by RNA polymerase II. H2BK120Ub also acts as a regulator of mRNA splicing: deubiquitination by USP49 is required for efficient cotranscriptional splicing of a large set of exons. Phosphorylation at Ser-37 (H2BS36ph) by AMPK in response to stress promotes transcription. Phosphorylated on Ser-15 (H2BS14ph) by STK4/MST1 during apoptosis; which facilitates apoptotic chromatin condensation. Also phosphorylated on Ser-15 in response to DNA double strand breaks (DSBs), and in correlation with somatic hypermutation and immunoglobulin class-switch recombination. In terms of processing, glcNAcylation at Ser-113 promotes monoubiquitination of Lys-121. It fluctuates in response to extracellular glucose, and associates with transcribed genes. Post-translationally, ADP-ribosylated by PARP1 or PARP2 on Ser-7 (H2BS6ADPr) in response to DNA damage. H2BS6ADPr promotes recruitment of CHD1L. Mono-ADP-ribosylated on Glu-3 (H2BE2ADPr) by PARP3 in response to single-strand breaks. Poly ADP-ribosylation on Glu-36 (H2BE35ADPr) by PARP1 regulates adipogenesis: it inhibits phosphorylation at Ser-37 (H2BS36ph), thereby blocking expression of pro-adipogenetic genes. Crotonylation (Kcr) is specifically present in male germ cells and marks testis-specific genes in post-meiotic cells, including X-linked genes that escape sex chromosome inactivation in haploid cells. Crotonylation marks active promoters and enhancers and confers resistance to transcriptional repressors. It is also associated with post-meiotically activated genes on autosomes. In terms of processing, lactylated in macrophages by EP300/P300 by using lactoyl-CoA directly derived from endogenous or exogenous lactate, leading to stimulates gene transcription.

The protein resides in the nucleus. It is found in the chromosome. Its function is as follows. Core component of nucleosome. Nucleosomes wrap and compact DNA into chromatin, limiting DNA accessibility to the cellular machineries which require DNA as a template. Histones thereby play a central role in transcription regulation, DNA repair, DNA replication and chromosomal stability. DNA accessibility is regulated via a complex set of post-translational modifications of histones, also called histone code, and nucleosome remodeling. Has broad antibacterial activity. May contribute to the formation of the functional antimicrobial barrier of the colonic epithelium, and to the bactericidal activity of amniotic fluid. The sequence is that of Histone H2B type 1-K from Homo sapiens (Human).